The sequence spans 644 residues: DNA gyrase subunit B (644 aa).

Residues 429 to 543 (CEIFLVEGDS…AGYVYIAQPP (115 aa)) form the Toprim domain. Mg(2+)-binding residues include glutamate 435, aspartate 508, and aspartate 510.

This sequence belongs to the type II topoisomerase GyrB family. In terms of assembly, heterotetramer, composed of two GyrA and two GyrB chains. In the heterotetramer, GyrA contains the active site tyrosine that forms a transient covalent intermediate with DNA, while GyrB binds cofactors and catalyzes ATP hydrolysis. Requires Mg(2+) as cofactor. Mn(2+) is required as a cofactor. The cofactor is Ca(2+).

It localises to the cytoplasm. It carries out the reaction ATP-dependent breakage, passage and rejoining of double-stranded DNA.. Functionally, a type II topoisomerase that negatively supercoils closed circular double-stranded (ds) DNA in an ATP-dependent manner to modulate DNA topology and maintain chromosomes in an underwound state. Negative supercoiling favors strand separation, and DNA replication, transcription, recombination and repair, all of which involve strand separation. Also able to catalyze the interconversion of other topological isomers of dsDNA rings, including catenanes and knotted rings. Type II topoisomerases break and join 2 DNA strands simultaneously in an ATP-dependent manner. This is DNA gyrase subunit B from Staphylococcus aureus (strain USA300).